A 132-amino-acid chain; its full sequence is Small ribosomal subunit protein uS11 (132 aa).

It belongs to the universal ribosomal protein uS11 family. Part of the 30S ribosomal subunit.

Located on the platform of the 30S subunit. This is Small ribosomal subunit protein uS11 from Caldivirga maquilingensis (strain ATCC 700844 / DSM 13496 / JCM 10307 / IC-167).